A 664-amino-acid chain; its full sequence is Intraflagellar transport protein 70A (664 aa).

7 TPR repeats span residues 11–44 (DGEF…SPRS), 45–78 (RAGL…HPEL), 153–186 (LDGQ…SGYR), 188–220 (DLSY…GIRQ), 392–423 (LTKQ…EKYI), 424–456 (PVLM…CNDH), and 458–491 (VWKL…HYDN). Residues 507-534 (YIMTSQNEEAEELMRKIEKEEEQLSYDD) are a coiled coil. The TPR 8 repeat unit spans residues 543 to 576 (CIVNLVIGTLYCAKGNYDFGISRVIKSLEPYNKK).

This sequence belongs to the TTC30/dfy-1/fleer family.

Its subcellular location is the cell projection. It is found in the cilium. Required for polyglutamylation of axonemal tubulin. Plays a role in anterograde intraflagellar transport (IFT), the process by which cilia precursors are transported from the base of the cilium to the site of their incorporation at the tip. This chain is Intraflagellar transport protein 70A (IFT70A), found in Bos taurus (Bovine).